A 634-amino-acid chain; its full sequence is Threonine--tRNA ligase (634 aa).

In terms of domain architecture, TGS spans 1 to 61; that stretch reads MINITLPDGS…DHDASLRIIT (61 aa). The catalytic stretch occupies residues 243 to 534; that stretch reads DHRRIGKAQD…LIEHHAGAFP (292 aa). Zn(2+) contacts are provided by Cys334, His385, and His511.

Belongs to the class-II aminoacyl-tRNA synthetase family. In terms of assembly, homodimer. Zn(2+) is required as a cofactor.

The protein localises to the cytoplasm. It carries out the reaction tRNA(Thr) + L-threonine + ATP = L-threonyl-tRNA(Thr) + AMP + diphosphate + H(+). Functionally, catalyzes the attachment of threonine to tRNA(Thr) in a two-step reaction: L-threonine is first activated by ATP to form Thr-AMP and then transferred to the acceptor end of tRNA(Thr). Also edits incorrectly charged L-seryl-tRNA(Thr). In Xanthomonas oryzae pv. oryzae (strain MAFF 311018), this protein is Threonine--tRNA ligase.